The primary structure comprises 345 residues: Phosphoribosylformylglycinamidine cyclo-ligase (345 aa).

This sequence belongs to the AIR synthase family.

It localises to the cytoplasm. It catalyses the reaction 2-formamido-N(1)-(5-O-phospho-beta-D-ribosyl)acetamidine + ATP = 5-amino-1-(5-phospho-beta-D-ribosyl)imidazole + ADP + phosphate + H(+). The protein operates within purine metabolism; IMP biosynthesis via de novo pathway; 5-amino-1-(5-phospho-D-ribosyl)imidazole from N(2)-formyl-N(1)-(5-phospho-D-ribosyl)glycinamide: step 2/2. This is Phosphoribosylformylglycinamidine cyclo-ligase from Shewanella baltica (strain OS223).